A 35-amino-acid polypeptide reads, in one-letter code: Fatty acid synthase (35 aa).

Serine 12 is an active-site residue.

As to quaternary structure, homodimer which is arranged in a head to tail fashion. Interacts with CEACAM1; this interaction is insulin and phosphorylation-dependent; reduces fatty-acid synthase activity.

Its subcellular location is the cytoplasm. The protein resides in the melanosome. The catalysed reaction is acetyl-CoA + n malonyl-CoA + 2n NADPH + 2n H(+) = a long-chain fatty acid + (n+1) CoA + n CO2 + 2n NADP(+).. Functionally, fatty acid synthetase catalyzes the formation of long-chain fatty acids from acetyl-CoA, malonyl-CoA and NADPH. This multifunctional protein has 7 catalytic activities as an acyl carrier protein. This fragment is from the acyltransferase domain of the fatty acid synthetase. This chain is Fatty acid synthase (FASN), found in Capra hircus (Goat).